Consider the following 1218-residue polypeptide: Cytosolic carboxypeptidase 1 (1218 aa).

2 disordered regions span residues 476-512 (VVMK…RVAP) and 590-617 (TEDD…PTLH). Residues 477-499 (VMKERASPKGEEAKEDPKGHDRT) are compositionally biased toward basic and acidic residues. In terms of domain architecture, Peptidase M14 spans 840-1130 (YPYTYSTLQM…KFCVGLLRLK (291 aa)). Zn(2+) is bound by residues H912, E915, and H1009. The active-site Proton donor/acceptor is the E1094. A Phosphoserine modification is found at S1160. The segment at 1193–1218 (ENTGDYEPSAQEEALSDSEVSRTHLI) is disordered.

The protein belongs to the peptidase M14 family. Interacts with MYLK. Requires Zn(2+) as cofactor. In terms of tissue distribution, widely expressed. Highly expressed in the cerebellum and cortex of adult mouse brain. Expressed at similar levels in both the cerebellum and the cortex throughout all developmental stages. Also expressed in sciatic nerve transection, spinal motor neurons undergoing axon regeneration, testis, heart, eye, lung, pancreas, intestine, stomach, pituitary, spleen, adrenal, kidney and in developing brain. Expression in cranial motor nuclei is the same as that observed in uninjured primary motor neurons. Expression is prevalent in sensory neurons and hippocampal CA3 neurons in addition to regenerating motor neurons.

Its subcellular location is the cytoplasm. It is found in the cytosol. The protein localises to the nucleus. It localises to the mitochondrion. It carries out the reaction (L-glutamyl)(n+1)-gamma-L-glutamyl-L-glutamyl-[protein] + H2O = (L-glutamyl)(n)-gamma-L-glutamyl-L-glutamyl-[protein] + L-glutamate. The catalysed reaction is C-terminal L-alpha-aminoacyl-L-glutamyl-L-glutamyl-[tubulin] + H2O = C-terminal L-alpha-aminoacyl-L-glutamyl-[tubulin] + L-glutamate. Its function is as follows. Metallocarboxypeptidase that mediates protein deglutamylation of tubulin and non-tubulin target proteins. Catalyzes the removal of polyglutamate side chains present on the gamma-carboxyl group of glutamate residues within the C-terminal tail of alpha- and beta-tubulin. Specifically cleaves tubulin long-side-chains, while it is not able to remove the branching point glutamate. Also catalyzes the removal of polyglutamate residues from the carboxy-terminus of alpha-tubulin as well as non-tubulin proteins such as MYLK. Involved in KLF4 deglutamylation which promotes KLF4 proteasome-mediated degradation, thereby negatively regulating cell pluripotency maintenance and embryogenesis. This is Cytosolic carboxypeptidase 1 from Mus musculus (Mouse).